The sequence spans 334 residues: Anthranilate phosphoribosyltransferase (334 aa).

5-phospho-alpha-D-ribose 1-diphosphate is bound by residues Gly-79, 82–83, Ser-87, 89–92, 107–115, and Ser-119; these read GD, NIST, and KHGNRSISS. Gly-79 contacts anthranilate. Ser-91 contacts Mg(2+). Residue Asn-110 participates in anthranilate binding. Arg-165 lines the anthranilate pocket. Asp-224 and Glu-225 together coordinate Mg(2+).

This sequence belongs to the anthranilate phosphoribosyltransferase family. Homodimer. The cofactor is Mg(2+).

The catalysed reaction is N-(5-phospho-beta-D-ribosyl)anthranilate + diphosphate = 5-phospho-alpha-D-ribose 1-diphosphate + anthranilate. It functions in the pathway amino-acid biosynthesis; L-tryptophan biosynthesis; L-tryptophan from chorismate: step 2/5. Its function is as follows. Catalyzes the transfer of the phosphoribosyl group of 5-phosphorylribose-1-pyrophosphate (PRPP) to anthranilate to yield N-(5'-phosphoribosyl)-anthranilate (PRA). This chain is Anthranilate phosphoribosyltransferase, found in Streptococcus gordonii (strain Challis / ATCC 35105 / BCRC 15272 / CH1 / DL1 / V288).